A 1100-amino-acid polypeptide reads, in one-letter code: Exportin-T (1100 aa).

This sequence belongs to the exportin family. As to quaternary structure, interacts with GSP1, GSP2, NSP1, NUP2 and UTP8.

The protein resides in the nucleus. It localises to the cytoplasm. TRNA nucleus export receptor which facilitates tRNA translocation across the nuclear pore complex. Preferentially interacts with tRNAs with mature 5'- and 3'-termini and does not distinguish between intron-containing and spliced tRNAs. In the nucleus binds to tRNA and to the Ran-GTPases GSP1 or GSP2 in their active GTP-bound form. Docking of this trimeric complex to the nuclear pore complex (NPC) is mediated through binding to nucleoporins. Upon transit of a nuclear export complex into the cytoplasm, disassembling of the complex and hydrolysis of Ran-GTP to Ran-GDP cause release of the tRNA from the export receptor. The directionality of nuclear export is thought to be conferred by an asymmetric distribution of the GTP- and GDP-bound forms of Ran between the cytoplasm and nucleus. Involved in pre-tRNA splicing, probably by affecting the interaction of pre-tRNA with splicing endonuclease. This is Exportin-T (LOS1) from Saccharomyces cerevisiae (strain YJM789) (Baker's yeast).